The primary structure comprises 249 residues: Probable amino-acid import ATP-binding protein YxeO (249 aa).

In terms of domain architecture, ABC transporter spans 2 to 239 (ITVKNIRKAF…PKNERTKRFI (238 aa)). ATP is bound at residue 34 to 41 (GPSGSGKS).

It belongs to the ABC transporter superfamily. In terms of assembly, the complex is composed of two ATP-binding proteins (YxeO), two transmembrane proteins (YxeN) and a solute-binding protein (YxeM).

It localises to the cell membrane. Functionally, probably part of the ABC transporter complex YxeMNO that could be involved in amino-acid import. May transport S-methylcysteine. Responsible for energy coupling to the transport system. The polypeptide is Probable amino-acid import ATP-binding protein YxeO (yxeO) (Bacillus subtilis (strain 168)).